Reading from the N-terminus, the 59-residue chain is Large ribosomal subunit protein uL30 (59 aa).

The protein belongs to the universal ribosomal protein uL30 family. As to quaternary structure, part of the 50S ribosomal subunit.

This is Large ribosomal subunit protein uL30 from Rhodococcus erythropolis (strain PR4 / NBRC 100887).